A 105-amino-acid chain; its full sequence is MSKSNTYRMLVLLEDDTKINKEDEKFLKGKPGKMHEFVDELILPFNVDELDELNTWFDKFDAEICIPNEGHIKYEISSDGLIVLMLDKEIEEVVEKVKKFVEENN.

The residue at position 2 (S2) is an N-acetylserine.

This is an uncharacterized protein from Saccharomyces cerevisiae (strain ATCC 204508 / S288c) (Baker's yeast).